We begin with the raw amino-acid sequence, 360 residues long: Peptide chain release factor 1 (360 aa).

The residue at position 237 (Gln-237) is an N5-methylglutamine.

This sequence belongs to the prokaryotic/mitochondrial release factor family. In terms of processing, methylated by PrmC. Methylation increases the termination efficiency of RF1.

Its subcellular location is the cytoplasm. Functionally, peptide chain release factor 1 directs the termination of translation in response to the peptide chain termination codons UAG and UAA. The polypeptide is Peptide chain release factor 1 (Stutzerimonas stutzeri (strain A1501) (Pseudomonas stutzeri)).